The chain runs to 562 residues: Tryptophan 2-monooxygenase (562 aa).

FMN is bound by residues S54, E74, R76, R82, and R104. R104 is a binding site for substrate.

This sequence belongs to the tryptophan 2-monooxygenase family. The cofactor is FMN.

The catalysed reaction is L-tryptophan + O2 = indole-3-acetamide + CO2 + H2O. It functions in the pathway plant hormone metabolism; auxin biosynthesis. This is Tryptophan 2-monooxygenase (iaaM) from Pantoea agglomerans pv. gypsophilae (Erwinia herbicola).